A 252-amino-acid chain; its full sequence is Hydroxyacylglutathione hydrolase (252 aa).

Positions 54, 56, 58, 59, 111, 128, and 166 each coordinate Zn(2+).

This sequence belongs to the metallo-beta-lactamase superfamily. Glyoxalase II family. In terms of assembly, monomer. Zn(2+) is required as a cofactor.

The catalysed reaction is an S-(2-hydroxyacyl)glutathione + H2O = a 2-hydroxy carboxylate + glutathione + H(+). It functions in the pathway secondary metabolite metabolism; methylglyoxal degradation; (R)-lactate from methylglyoxal: step 2/2. In terms of biological role, thiolesterase that catalyzes the hydrolysis of S-D-lactoyl-glutathione to form glutathione and D-lactic acid. This Aliivibrio salmonicida (strain LFI1238) (Vibrio salmonicida (strain LFI1238)) protein is Hydroxyacylglutathione hydrolase.